Consider the following 305-residue polypeptide: Short-chain dehydrogenase/reductase VdtF (305 aa).

The NADP(+) site is built by Leu28 and Asn98. Catalysis depends on Ser192, which acts as the Proton donor. NADP(+) contacts are provided by Tyr206, Lys210, and Thr241. The active-site Proton acceptor is the Tyr206. The Lowers pKa of active site Tyr role is filled by Lys210.

It belongs to the short-chain dehydrogenases/reductases (SDR) family.

It catalyses the reaction methyl 2-[(3S)-9,10-dihydroxy-7-methoxy-1-oxo-1H,3H,4H-naphtho[2,3-c]pyran-3-yl]acetate + AH2 = semiviriditoxin + A. The enzyme catalyses 9,10-dihydroxy-7-methoxy-3-(2-oxopropyl)-1H-benzo[g]isochromen-1-one + AH2 = (3S)-9,10-dihydroxy-7-methoxy-3-(2-oxopropyl)-1H,3H,4H-naphtho[2,3-c]pyran-1-one + A. The protein operates within secondary metabolite biosynthesis. In terms of biological role, short-chain dehydrogenase/reductase; part of the gene cluster that mediates the biosynthesis of viriditoxin, one of the 'classical' secondary metabolites produced by fungi and that has antibacterial activity. The first step is performed by the polyketide synthase VdtA which condenses one acetyl-CoA and 6 malonyl-CoA units to form the heptaketide monomer backbone of viriditoxin. The product of VdtA is then O-methylated on C7 by the O-methyltransferase VdtC. The O-methyl group is important for the stereoselective coupling of the monomers at the final step of viriditoxin biosynthesis. The short-chain dehydrogenase/reductase VdtF then acts as a stereospecific reductase converting the pyrone to dihydropyrone via the reduction of the C3-C4 double bond. The FAD-binding monooxygenase VdtE then converts the ketone group into a methyl-ester group to yield semi-viriditoxin. Finally, the laccase VdtB is involved in dimerization of 2 semi-viriditoxin molecules to yield the final viriditoxin. VdtB is responsible for the regioselective 6,6'-coupling of semi-viriditoxin, which yields (M)-viriditoxin and (P)-viriditoxin at a ratio of 1:2. The non-catalytic carboxylesterase-like protein VdtD affects the stereochemistical outcome of the coupling. The highly reducing polyketide synthase VdtX is not involved in viriditoxin synthesis, but might possibly play a role in the production of additional metabolites not identified yet. The polypeptide is Short-chain dehydrogenase/reductase VdtF (Byssochlamys spectabilis (Paecilomyces variotii)).